The chain runs to 307 residues: uncharacterized protein (307 aa).

The first 25 residues, 1-25 (MKFQKRNIQLVLILLLILNNCFINS), serve as a signal peptide directing secretion. The disordered stretch occupies residues 60–90 (ENNNKNNNNNNNNNNNNNNNNKNSKVKNDDS). The segment covering 63 to 82 (NKNNNNNNNNNNNNNNNNKN) has biased composition (low complexity). Residues Asn-124 and Asn-173 are each glycosylated (N-linked (GlcNAc...) asparagine). The next 2 membrane-spanning stretches (helical) occupy residues 244–264 (IIFA…YYLA) and 275–295 (IIGV…TIVI).

Its subcellular location is the membrane. This is an uncharacterized protein from Dictyostelium discoideum (Social amoeba).